A 466-amino-acid polypeptide reads, in one-letter code: Nuclear pore complex protein Nup50 (466 aa).

A compositionally biased stretch (basic and acidic residues) spans Met1 to Asn14. The interval Met1 to Glu22 is disordered. Lys8 is modified (N6-acetyllysine). At Ser52 the chain carries Phosphoserine. Copy 1 of the repeat occupies Phe76–Gly77. The interval Phe76–Gly302 is 5 X 2 AA repeats of F-G. Lys82 is subject to N6-acetyllysine. Repeat unit 2 spans residues Phe112–Gly113. Lys126 carries the post-translational modification N6-acetyllysine. Disordered regions lie at residues Ile128 to Cys150 and Leu200 to Lys257. The span at Pro131–Cys150 shows a compositional bias: polar residues. A binding to CDKN1B region spans residues Gly143–Gly205. A Phosphoserine modification is found at Ser208. The stretch at Phe225–Gly226 is repeat 3. Polar residues predominate over residues Phe225 to Pro235. At Ser234 the chain carries Phosphoserine. Positions Asn241 to Lys257 are enriched in basic and acidic residues. Residue Thr246 is modified to Phosphothreonine. Ser268 is subject to Phosphoserine. Copy 4 of the repeat occupies Phe271–Gly272. Ser294 carries the phosphoserine modification. Residues Phe301–Gly302 form repeat 5. The tract at residues Ser316–Pro343 is disordered. The RanBD1 domain occupies Asp333 to Ala466. Lys351 is covalently cross-linked (Glycyl lysine isopeptide (Lys-Gly) (interchain with G-Cter in SUMO2)). An N6-acetyllysine modification is found at Lys448.

Does not interact with TPR. Interacts with Importin alpha-2, Importin beta, Importin beta-2, NUP153, Ran binding protein 7, CDKN1B and itself. In terms of tissue distribution, widely expressed at low levels. Highest in the developing neural tube and adult testes.

Its subcellular location is the nucleus. The protein resides in the nuclear pore complex. It is found in the nucleus membrane. Functionally, component of the nuclear pore complex that has a direct role in nuclear protein import. Actively displaces NLSs from importin-alpha, and facilitates disassembly of the importin-alpha:beta-cargo complex and importin recycling. Interacts with regulatory proteins of cell cycle progression including CDKN1B. This interaction is required for correct intracellular transport and degradation of CDKN1B. The chain is Nuclear pore complex protein Nup50 (Nup50) from Mus musculus (Mouse).